The sequence spans 113 residues: Ribulose bisphosphate carboxylase small subunit (113 aa).

The protein belongs to the RuBisCO small chain family. In terms of assembly, heterohexadecamer of 8 large and 8 small subunits.

It localises to the carboxysome. Functionally, ruBisCO catalyzes two reactions: the carboxylation of D-ribulose 1,5-bisphosphate, the primary event in carbon dioxide fixation, as well as the oxidative fragmentation of the pentose substrate in the photorespiration process. Both reactions occur simultaneously and in competition at the same active site. Although the small subunit is not catalytic it is essential for maximal activity. The polypeptide is Ribulose bisphosphate carboxylase small subunit (Synechococcus sp. (strain WH7803)).